The following is a 576-amino-acid chain: MAGUK p55 subfamily member 7 (576 aa).

L27 domains lie at 10-64 (SEMG…EDCA) and 65-122 (PTPV…YDPE). Residues 139 to 220 (IIRLVKNKEP…AITFKVVPGI (82 aa)) enclose the PDZ domain. One can recognise an SH3 domain in the interval 228–298 (EPKMFIKALF…PSKHFQERRL (71 aa)). Residues 368-560 (HRLVVLVGPT…AFSELKQALK (193 aa)) form the Guanylate kinase-like domain.

This sequence belongs to the MAGUK family.

It localises to the membrane. It is found in the cell junction. Its subcellular location is the tight junction. The protein resides in the adherens junction. Functionally, acts as an important adapter that promotes epithelial cell polarity and tight junction formation. Involved in the assembly of protein complexes at sites of cell-cell contact. This chain is MAGUK p55 subfamily member 7 (mpp7), found in Danio rerio (Zebrafish).